The chain runs to 262 residues: Acyl-[acyl-carrier-protein]--UDP-N-acetylglucosamine O-acyltransferase (262 aa).

Belongs to the transferase hexapeptide repeat family. LpxA subfamily. In terms of assembly, homotrimer.

It localises to the cytoplasm. It carries out the reaction a (3R)-hydroxyacyl-[ACP] + UDP-N-acetyl-alpha-D-glucosamine = a UDP-3-O-[(3R)-3-hydroxyacyl]-N-acetyl-alpha-D-glucosamine + holo-[ACP]. It functions in the pathway glycolipid biosynthesis; lipid IV(A) biosynthesis; lipid IV(A) from (3R)-3-hydroxytetradecanoyl-[acyl-carrier-protein] and UDP-N-acetyl-alpha-D-glucosamine: step 1/6. Involved in the biosynthesis of lipid A, a phosphorylated glycolipid that anchors the lipopolysaccharide to the outer membrane of the cell. The chain is Acyl-[acyl-carrier-protein]--UDP-N-acetylglucosamine O-acyltransferase from Shigella flexneri serotype 5b (strain 8401).